Consider the following 697-residue polypeptide: SITS-binding protein (697 aa).

The interval 1 to 20 (MARRAKKMASNSGDSSPEPG) is disordered. The Cytoplasmic segment spans residues 2 to 29 (ARRAKKMASNSGDSSPEPGIKEINETWK). Residues 30-50 (GAIACLGVALLFLMTIGVLYW) traverse the membrane as a helical segment. N112, N134, N162, N386, N405, and N470 each carry an N-linked (GlcNAc...) asparagine glycan. 2 consecutive transmembrane segments (helical) span residues 503-521 (GLIP…FFIP) and 542-562 (WMQI…WVFG). N-linked (GlcNAc...) asparagine glycosylation is present at N568.

Belongs to the glycosyl hydrolase 31 family. Homodimer; disulfide-linked. As to expression, electroplax tissue, brain (200-fold less), and heart (500-fold less).

It is found in the membrane. In terms of biological role, this glycoprotein is probably not a functional part of the chloride channel. This chain is SITS-binding protein, found in Tetronarce californica (Pacific electric ray).